The following is a 63-amino-acid chain: ORF6 protein (63 aa).

Belongs to the coronaviruses accessory protein 6 family.

The protein resides in the host endoplasmic reticulum membrane. The protein localises to the host Golgi apparatus membrane. In terms of biological role, could be a determinant of virus virulence. Seems to stimulate cellular DNA synthesis in vitro. The sequence is that of ORF6 protein from Rhinolophus macrotis (Big-eared horseshoe bat).